A 373-amino-acid polypeptide reads, in one-letter code: Chaperone protein DnaJ (373 aa).

Residues 5-70 (DFYATLGVAR…EKRAMYDQYG (66 aa)) form the J domain. Residues 134 to 212 (GVKKRINIPT…CRGAGRNKAV (79 aa)) form a CR-type zinc finger. Zn(2+)-binding residues include Cys-147, Cys-150, Cys-164, Cys-167, Cys-186, Cys-189, Cys-200, and Cys-203. CXXCXGXG motif repeat units follow at residues 147–154 (CDVCNGSG), 164–171 (CPTCKGSG), 186–193 (CPTCHGAG), and 200–207 (CVKCRGAG).

This sequence belongs to the DnaJ family. As to quaternary structure, homodimer. Requires Zn(2+) as cofactor.

It is found in the cytoplasm. Functionally, participates actively in the response to hyperosmotic and heat shock by preventing the aggregation of stress-denatured proteins and by disaggregating proteins, also in an autonomous, DnaK-independent fashion. Unfolded proteins bind initially to DnaJ; upon interaction with the DnaJ-bound protein, DnaK hydrolyzes its bound ATP, resulting in the formation of a stable complex. GrpE releases ADP from DnaK; ATP binding to DnaK triggers the release of the substrate protein, thus completing the reaction cycle. Several rounds of ATP-dependent interactions between DnaJ, DnaK and GrpE are required for fully efficient folding. Also involved, together with DnaK and GrpE, in the DNA replication of plasmids through activation of initiation proteins. This is Chaperone protein DnaJ from Neisseria meningitidis serogroup C (strain 053442).